Consider the following 164-residue polypeptide: UPF0178 protein RPB_3201 (164 aa).

It belongs to the UPF0178 family.

This chain is UPF0178 protein RPB_3201, found in Rhodopseudomonas palustris (strain HaA2).